The following is a 113-amino-acid chain: Putative single-stranded DNA-binding protein ycf41 (113 aa).

Positions 1–101 (MNYASFIIKI…EVSGFKIYPF (101 aa)) constitute an SSB domain.

It is found in the plastid. Its subcellular location is the chloroplast. In Trieres chinensis (Marine centric diatom), this protein is Putative single-stranded DNA-binding protein ycf41 (ycf41).